A 435-amino-acid polypeptide reads, in one-letter code: Gamma-glutamyl phosphate reductase (435 aa).

Belongs to the gamma-glutamyl phosphate reductase family.

Its subcellular location is the cytoplasm. The enzyme catalyses L-glutamate 5-semialdehyde + phosphate + NADP(+) = L-glutamyl 5-phosphate + NADPH + H(+). The protein operates within amino-acid biosynthesis; L-proline biosynthesis; L-glutamate 5-semialdehyde from L-glutamate: step 2/2. Functionally, catalyzes the NADPH-dependent reduction of L-glutamate 5-phosphate into L-glutamate 5-semialdehyde and phosphate. The product spontaneously undergoes cyclization to form 1-pyrroline-5-carboxylate. The polypeptide is Gamma-glutamyl phosphate reductase (Synechococcus sp. (strain WH7803)).